Reading from the N-terminus, the 270-residue chain is NAD(P)H-hydrate epimerase (270 aa).

One can recognise a YjeF N-terminal domain in the interval Phe-25 to Gln-234. Asp-73 to Gln-77 is a binding site for (6S)-NADPHX. Residues Asn-74 and Asp-144 each coordinate K(+). (6S)-NADPHX is bound by residues Gly-148–His-154 and Glu-177. A K(+)-binding site is contributed by Thr-180.

This sequence belongs to the NnrE/AIBP family. Requires K(+) as cofactor.

The enzyme catalyses (6R)-NADHX = (6S)-NADHX. It catalyses the reaction (6R)-NADPHX = (6S)-NADPHX. In terms of biological role, catalyzes the epimerization of the S- and R-forms of NAD(P)HX, a damaged form of NAD(P)H that is a result of enzymatic or heat-dependent hydration. This is a prerequisite for the S-specific NAD(P)H-hydrate dehydratase to allow the repair of both epimers of NAD(P)HX. This is NAD(P)H-hydrate epimerase from Legionella pneumophila (strain Corby).